Here is a 93-residue protein sequence, read N- to C-terminus: UPF0358 protein OB1428 (93 aa).

This sequence belongs to the UPF0358 family.

This chain is UPF0358 protein OB1428, found in Oceanobacillus iheyensis (strain DSM 14371 / CIP 107618 / JCM 11309 / KCTC 3954 / HTE831).